The chain runs to 109 residues: Large ribosomal subunit protein uL24 (109 aa).

Belongs to the universal ribosomal protein uL24 family. Part of the 50S ribosomal subunit.

Functionally, one of two assembly initiator proteins, it binds directly to the 5'-end of the 23S rRNA, where it nucleates assembly of the 50S subunit. In terms of biological role, one of the proteins that surrounds the polypeptide exit tunnel on the outside of the subunit. This is Large ribosomal subunit protein uL24 from Rickettsia rickettsii (strain Iowa).